A 242-amino-acid chain; its full sequence is MANYYEVLGVQVQRFPEDIKKAYRKLALKWHPDKNPDNKEEAERRFKQVAEAYEVLSDAKKRDVYDRYGEAGAEGSCAVGRPFEDPFEYIFSFRDPAEVFREFFGGQDPFSFDFFGNPLENILGSRRNSRGSRSRGSAPLFSTFSEFPAFGGGFSSFDTGFSSFGSLGSGGLSSFWMSYGSDGTGSFKSMSTSTEIVDGKKITTKRIIENGQERVEVEEDGEFSLKSFIINSKEQLLRIDTK.

Residues 1–69 form the J domain; sequence MANYYEVLGV…KKRDVYDRYG (69 aa).

Testis specific.

Functionally, may operate as a co-chaperone of the male germ cell- and haploid stage-specific Hsp70 proteins. The sequence is that of DnaJ homolog subfamily B member 3 (DNAJB3) from Macaca fuscata fuscata (Japanese macaque).